The following is a 269-amino-acid chain: Phosphonoacetaldehyde hydrolase (269 aa).

Aspartate 10 acts as the Nucleophile in catalysis. 2 residues coordinate Mg(2+): aspartate 10 and alanine 12. The active-site Schiff-base intermediate with substrate is lysine 52. Aspartate 186 lines the Mg(2+) pocket.

It belongs to the HAD-like hydrolase superfamily. PhnX family. In terms of assembly, homodimer. Mg(2+) serves as cofactor.

The enzyme catalyses phosphonoacetaldehyde + H2O = acetaldehyde + phosphate + H(+). Involved in phosphonate degradation. This chain is Phosphonoacetaldehyde hydrolase, found in Klebsiella pneumoniae subsp. pneumoniae (strain ATCC 700721 / MGH 78578).